We begin with the raw amino-acid sequence, 363 residues long: Serpentine receptor class beta-17 (363 aa).

The next 7 helical transmembrane spans lie at 46–66 (AFLL…GSII), 75–95 (LLAF…SCFL), 120–140 (VILA…SMLC), 169–189 (IGFV…LYMY), 214–234 (YIFI…IGLY), 273–293 (CAQL…RIFL), and 304–324 (VTEF…ICIV).

Belongs to the nematode receptor-like protein srb family.

It is found in the membrane. This is Serpentine receptor class beta-17 (srb-17) from Caenorhabditis elegans.